The chain runs to 189 residues: Nucleoside diphosphate kinase 6 (189 aa).

Residues Lys19, Phe68, Arg96, Thr102, Arg116, and Asn126 each contribute to the ATP site. His129 acts as the Pros-phosphohistidine intermediate in catalysis.

It belongs to the NDK family. Requires Mg(2+) as cofactor.

The enzyme catalyses a 2'-deoxyribonucleoside 5'-diphosphate + ATP = a 2'-deoxyribonucleoside 5'-triphosphate + ADP. It carries out the reaction a ribonucleoside 5'-diphosphate + ATP = a ribonucleoside 5'-triphosphate + ADP. Its function is as follows. Major role in the synthesis of nucleoside triphosphates other than ATP. The ATP gamma phosphate is transferred to the NDP beta phosphate via a ping-pong mechanism, using a phosphorylated active-site intermediate. The protein is Nucleoside diphosphate kinase 6 (Nme6) of Mus musculus (Mouse).